We begin with the raw amino-acid sequence, 199 residues long: Recombination protein RecR (199 aa).

The C4-type zinc-finger motif lies at 57 to 72 (CSICGNITESDPCEIC). A Toprim domain is found at 80 to 176 (STIMVVEQPK…KVTRLAAGLA (97 aa)).

This sequence belongs to the RecR family.

In terms of biological role, may play a role in DNA repair. It seems to be involved in an RecBC-independent recombinational process of DNA repair. It may act with RecF and RecO. The protein is Recombination protein RecR of Lactobacillus johnsonii (strain CNCM I-12250 / La1 / NCC 533).